The following is a 158-amino-acid chain: NAD(P)H-quinone oxidoreductase subunit J, chloroplastic (158 aa).

The protein belongs to the complex I 30 kDa subunit family. As to quaternary structure, NDH is composed of at least 16 different subunits, 5 of which are encoded in the nucleus.

Its subcellular location is the plastid. It is found in the chloroplast thylakoid membrane. It catalyses the reaction a plastoquinone + NADH + (n+1) H(+)(in) = a plastoquinol + NAD(+) + n H(+)(out). The catalysed reaction is a plastoquinone + NADPH + (n+1) H(+)(in) = a plastoquinol + NADP(+) + n H(+)(out). Functionally, NDH shuttles electrons from NAD(P)H:plastoquinone, via FMN and iron-sulfur (Fe-S) centers, to quinones in the photosynthetic chain and possibly in a chloroplast respiratory chain. The immediate electron acceptor for the enzyme in this species is believed to be plastoquinone. Couples the redox reaction to proton translocation, and thus conserves the redox energy in a proton gradient. The sequence is that of NAD(P)H-quinone oxidoreductase subunit J, chloroplastic from Trachelium caeruleum (Blue throatwort).